A 197-amino-acid polypeptide reads, in one-letter code: 22.7 kDa class IV heat shock protein (197 aa).

Residues 1–28 (MSLKPLNMLLVPFLLLILAADFPLKAKA) form the signal peptide. The sHSP domain maps to 68 to 184 (PSITLSHARV…GPRMVSIVEE (117 aa)). A Prevents secretion from ER motif is present at residues 194 to 197 (DELK).

Belongs to the small heat shock protein (HSP20) family. Forms oligomeric structures.

The protein localises to the endoplasmic reticulum lumen. The protein is 22.7 kDa class IV heat shock protein (HSP22.7) of Pisum sativum (Garden pea).